We begin with the raw amino-acid sequence, 349 residues long: Thioredoxin-related transmembrane protein 4 (349 aa).

Residues 1-23 (MAGGRCGPQLTALLAAWIAAVAA) form the signal peptide. Positions 30–137 (AALPPEQSRV…FEDLQNYILE (108 aa)) constitute a Thioredoxin domain. Residues Cys-64 and Cys-67 each act as nucleophile in the active site. The cysteines at positions 64 and 67 are disulfide-linked. Residues 190 to 210 (VFFVIATLVFGLFMGLVLVVI) traverse the membrane as a helical segment. Residues 225–240 (RSEQNRRSEEAHRAEQ) are compositionally biased toward basic and acidic residues. Positions 225–349 (RSEQNRRSEE…RKSQHADKGL (125 aa)) are disordered. 2 stretches are compositionally biased toward acidic residues: residues 242 to 284 (QDAE…EEDN) and 312 to 321 (VEPEEAEEGI). Phosphoserine is present on residues Ser-251 and Ser-259. The span at 335–349 (DSLRQRKSQHADKGL) shows a compositional bias: basic and acidic residues.

It localises to the nucleus inner membrane. The protein resides in the endoplasmic reticulum membrane. The chain is Thioredoxin-related transmembrane protein 4 (TMX4) from Homo sapiens (Human).